The sequence spans 349 residues: UDP-3-O-acylglucosamine N-acyltransferase (349 aa).

H246 (proton acceptor) is an active-site residue.

This sequence belongs to the transferase hexapeptide repeat family. LpxD subfamily. As to quaternary structure, homotrimer.

It carries out the reaction a UDP-3-O-[(3R)-3-hydroxyacyl]-alpha-D-glucosamine + a (3R)-hydroxyacyl-[ACP] = a UDP-2-N,3-O-bis[(3R)-3-hydroxyacyl]-alpha-D-glucosamine + holo-[ACP] + H(+). It participates in bacterial outer membrane biogenesis; LPS lipid A biosynthesis. Its function is as follows. Catalyzes the N-acylation of UDP-3-O-acylglucosamine using 3-hydroxyacyl-ACP as the acyl donor. Is involved in the biosynthesis of lipid A, a phosphorylated glycolipid that anchors the lipopolysaccharide to the outer membrane of the cell. In Protochlamydia amoebophila (strain UWE25), this protein is UDP-3-O-acylglucosamine N-acyltransferase.